Reading from the N-terminus, the 316-residue chain is MSFVSDSNTAIDQAAISIASPADYLALMKPRVMSLVIFTALTGVLIAPTHVNPIIGFASLLAIAAGAGASGALNMWYDSDIDAIMRRTQKRPIPAGRVARESALAFGMVLALLSVITLGFVANWAAAALLAFTIFFYVVIYTMWLKRSTPQNIVIGGAAGAFPPIVAYLAVAGQVSLPALALFAIIFVWTPPHFWALALVKAGDFERAGIPMLPNVKGPDRTRRDILLYTLLLAPIGMTPYFIGFASPAYGLLSFGLGGVMILHAVRVYLAREGDQANRVAMRMFGFSILYLFLLFAAIVAERILALLPISSATPW.

9 helical membrane passes run 32–52, 53–73, 98–118, 120–140, 153–173, 180–200, 226–246, 251–271, and 280–300; these read VMSLVIFTALTGVLIAPTHVN, PIIGFASLLAIAAGAGASGAL, VARESALAFGMVLALLSVITL, FVANWAAAALLAFTIFFYVVI, IVIGGAAGAFPPIVAYLAVAG, LALFAIIFVWTPPHFWALALV, ILLYTLLLAPIGMTPYFIGFA, GLLSFGLGGVMILHAVRVYLA, and VAMRMFGFSILYLFLLFAAIV.

It belongs to the UbiA prenyltransferase family. Protoheme IX farnesyltransferase subfamily.

It is found in the cell inner membrane. The catalysed reaction is heme b + (2E,6E)-farnesyl diphosphate + H2O = Fe(II)-heme o + diphosphate. The protein operates within porphyrin-containing compound metabolism; heme O biosynthesis; heme O from protoheme: step 1/1. In terms of biological role, converts heme B (protoheme IX) to heme O by substitution of the vinyl group on carbon 2 of heme B porphyrin ring with a hydroxyethyl farnesyl side group. This chain is Protoheme IX farnesyltransferase, found in Methylocella silvestris (strain DSM 15510 / CIP 108128 / LMG 27833 / NCIMB 13906 / BL2).